A 122-amino-acid chain; its full sequence is uncharacterized protein (122 aa).

2 helical membrane passes run 36–56 (SVRS…YSQF) and 72–92 (AVFL…FSTD).

It is found in the membrane. This is an uncharacterized protein from Saccharomyces cerevisiae (strain ATCC 204508 / S288c) (Baker's yeast).